A 182-amino-acid chain; its full sequence is Small heat shock protein hspG1 (182 aa).

In terms of domain architecture, sHSP spans 43–182; sequence IKRIDIIPSM…SNSSFKININ (140 aa).

This sequence belongs to the small heat shock protein (HSP20) family.

This is Small heat shock protein hspG1 (hspG1) from Dictyostelium discoideum (Social amoeba).